A 241-amino-acid chain; its full sequence is Probable transcriptional regulatory protein LHK_02347 (241 aa).

This sequence belongs to the TACO1 family.

The protein localises to the cytoplasm. The chain is Probable transcriptional regulatory protein LHK_02347 from Laribacter hongkongensis (strain HLHK9).